A 624-amino-acid polypeptide reads, in one-letter code: Chaperone protein HtpG (624 aa).

The a; substrate-binding stretch occupies residues 1-336; that stretch reads MKGQETRGFQ…SNDLPLNVSR (336 aa). The b stretch occupies residues 337–552; it reads EILQDSTVTR…ADEMSTQMAK (216 aa). The c stretch occupies residues 553–624; that stretch reads LFAAAGQSVP…IRRMNQLLVS (72 aa).

This sequence belongs to the heat shock protein 90 family. In terms of assembly, homodimer.

The protein localises to the cytoplasm. Functionally, molecular chaperone. Has ATPase activity. This is Chaperone protein HtpG from Salmonella typhi.